A 63-amino-acid polypeptide reads, in one-letter code: Cecropin-A1 (63 aa).

A signal peptide spans 1 to 23 (MNFYNIFVFVALILAITIGQSEA). Position 62 is an arginine amide (Arg-62).

This sequence belongs to the cecropin family.

It localises to the secreted. In terms of biological role, cecropins have lytic and antibacterial activity against several Gram-positive and Gram-negative bacteria. This chain is Cecropin-A1 (CecA1), found in Drosophila sechellia (Fruit fly).